The chain runs to 285 residues: Bifunctional protein FolD (285 aa).

Residues G164 to S166, S193, and I234 contribute to the NADP(+) site.

The protein belongs to the tetrahydrofolate dehydrogenase/cyclohydrolase family. In terms of assembly, homodimer.

It catalyses the reaction (6R)-5,10-methylene-5,6,7,8-tetrahydrofolate + NADP(+) = (6R)-5,10-methenyltetrahydrofolate + NADPH. The enzyme catalyses (6R)-5,10-methenyltetrahydrofolate + H2O = (6R)-10-formyltetrahydrofolate + H(+). It functions in the pathway one-carbon metabolism; tetrahydrofolate interconversion. Functionally, catalyzes the oxidation of 5,10-methylenetetrahydrofolate to 5,10-methenyltetrahydrofolate and then the hydrolysis of 5,10-methenyltetrahydrofolate to 10-formyltetrahydrofolate. The sequence is that of Bifunctional protein FolD from Desulfovibrio desulfuricans (strain ATCC 27774 / DSM 6949 / MB).